The sequence spans 171 residues: UPF0763 protein Hac_0849 (171 aa).

This sequence belongs to the UPF0763 family.

The protein is UPF0763 protein Hac_0849 of Helicobacter acinonychis (strain Sheeba).